The sequence spans 103 residues: Urease subunit beta (103 aa).

This sequence belongs to the urease beta subunit family. Heterotrimer of UreA (gamma), UreB (beta) and UreC (alpha) subunits. Three heterotrimers associate to form the active enzyme.

The protein resides in the cytoplasm. It carries out the reaction urea + 2 H2O + H(+) = hydrogencarbonate + 2 NH4(+). Its pathway is nitrogen metabolism; urea degradation; CO(2) and NH(3) from urea (urease route): step 1/1. This is Urease subunit beta from Blochmanniella floridana.